Here is a 160-residue protein sequence, read N- to C-terminus: Troponin C, skeletal muscle (160 aa).

Position 2 is an N-acetylthreonine (Thr2). EF-hand domains are found at residues 15-50 (EMIAEFKAAFDMFDADGGGDISVKELGTVMRMLGQT), 51-86 (PTKEELDAIIEEVDEDGSGTIDFEEFLVMMVRQMKE), 91-126 (KSEEELAECFRIFDRNADGYIDAEELAEIFRASGEH), and 127-160 (VTEEEIESLMKDGDKNNDGRIDFDEFLKMMEGVQ). 19 residues coordinate Ca(2+): Asp28, Asp30, Asp34, Glu39, Asp64, Asp66, Ser68, Thr70, Glu75, Asp104, Asn106, Asp108, Tyr110, Glu115, Asp140, Asn142, Asp144, Arg146, and Glu151.

The protein belongs to the troponin C family. As to expression, fast skeletal muscle.

Troponin is the central regulatory protein of striated muscle contraction. Tn consists of three components: Tn-I which is the inhibitor of actomyosin ATPase, Tn-T which contains the binding site for tropomyosin and Tn-C. The binding of calcium to Tn-C abolishes the inhibitory action of Tn on actin filaments. The polypeptide is Troponin C, skeletal muscle (Tnnc2) (Mus musculus (Mouse)).